A 428-amino-acid chain; its full sequence is Glutamate-1-semialdehyde 2,1-aminomutase (428 aa).

K265 is modified (N6-(pyridoxal phosphate)lysine).

It belongs to the class-III pyridoxal-phosphate-dependent aminotransferase family. HemL subfamily. In terms of assembly, homodimer. Requires pyridoxal 5'-phosphate as cofactor.

Its subcellular location is the cytoplasm. It carries out the reaction (S)-4-amino-5-oxopentanoate = 5-aminolevulinate. Its pathway is porphyrin-containing compound metabolism; protoporphyrin-IX biosynthesis; 5-aminolevulinate from L-glutamyl-tRNA(Glu): step 2/2. The protein is Glutamate-1-semialdehyde 2,1-aminomutase of Shewanella sediminis (strain HAW-EB3).